The primary structure comprises 947 residues: Bifunctional glutamine synthetase adenylyltransferase/adenylyl-removing enzyme (947 aa).

Residues 1–440 (MTPLSSPLSQ…VFNELIGDDE (440 aa)) form an adenylyl removase region. Residues 450–947 (SEPWREVWQD…ASWRKWLVAV (498 aa)) are adenylyl transferase.

The protein belongs to the GlnE family. The cofactor is Mg(2+).

It catalyses the reaction [glutamine synthetase]-O(4)-(5'-adenylyl)-L-tyrosine + phosphate = [glutamine synthetase]-L-tyrosine + ADP. It carries out the reaction [glutamine synthetase]-L-tyrosine + ATP = [glutamine synthetase]-O(4)-(5'-adenylyl)-L-tyrosine + diphosphate. Involved in the regulation of glutamine synthetase GlnA, a key enzyme in the process to assimilate ammonia. When cellular nitrogen levels are high, the C-terminal adenylyl transferase (AT) inactivates GlnA by covalent transfer of an adenylyl group from ATP to specific tyrosine residue of GlnA, thus reducing its activity. Conversely, when nitrogen levels are low, the N-terminal adenylyl removase (AR) activates GlnA by removing the adenylyl group by phosphorolysis, increasing its activity. The regulatory region of GlnE binds the signal transduction protein PII (GlnB) which indicates the nitrogen status of the cell. This is Bifunctional glutamine synthetase adenylyltransferase/adenylyl-removing enzyme from Salmonella enteritidis PT4 (strain P125109).